Reading from the N-terminus, the 330-residue chain is Lysophospholipase D GDPD3 (330 aa).

A topological domain (cytoplasmic) is located at residue M1. A helical transmembrane segment spans residues 2–22; the sequence is IPLLYFVLPTLGSYVMLSIFF. Over 23 to 200 the chain is Extracellular; that stretch reads LRRPHLLHTP…ANPEMPMAFT (178 aa). The region spanning 39 to 308 is the GP-PDE domain; that stretch reads IRLAAHRGGS…DYPTALRHYL (270 aa). Residues E71, D73, and H86 each coordinate a divalent metal cation. The chain crosses the membrane as a helical span at residues 201 to 221; the sequence is IWRSFWILLLYYLGLLPFVSI. At 222-330 the chain is on the cytoplasmic side; the sequence is PEKFFFCFLP…EALSCLSLKK (109 aa). The disordered stretch occupies residues 311–330; the sequence is QEEETQPPQPEALSCLSLKK.

Belongs to the glycerophosphoryl diester phosphodiesterase family. As to expression, highly expressed in stomach and kidney. In stomach detected in the glandular epithelium. Predominantly expressed in the stomach (at protein level).

It is found in the membrane. Its subcellular location is the cytoplasm. It localises to the perinuclear region. The protein resides in the endoplasmic reticulum membrane. It carries out the reaction 1-hexadecanoyl-sn-glycero-3-phosphocholine + H2O = 1-hexadecanoyl-sn-glycero-3-phosphate + choline + H(+). It catalyses the reaction 1-O-hexadecyl-sn-glycero-3-phosphocholine + H2O = 1-O-hexadecyl-sn-glycero-3-phosphate + choline + H(+). The enzyme catalyses 1-O-(1Z-octadecenyl)-sn-glycero-3-phospho-N-hexadecanoyl-ethanolamine + H2O = 1-O-(1Z-octadecenyl)-sn-glycero-3-phosphate + N-hexadecanoylethanolamine + H(+). The catalysed reaction is N-(5Z,8Z,11Z,14Z-eicosatetraenoyl)-1-(9Z-octadecenoyl)-sn-glycero-3-phosphoethanolamine + H2O = N-(5Z,8Z,11Z,14Z-eicosatetraenoyl)-ethanolamine + 1-(9Z-octadecenoyl)-sn-glycero-3-phosphate + H(+). It carries out the reaction N,1-di-(9Z-octadecenoyl)-sn-glycero-3-phosphoethanolamine + H2O = N-(9Z-octadecenoyl) ethanolamine + 1-(9Z-octadecenoyl)-sn-glycero-3-phosphate + H(+). It catalyses the reaction N-hexadecanoyl-1-(9Z-octadecenoyl)-sn-glycero-3-phosphoethanolamine + H2O = N-hexadecanoylethanolamine + 1-(9Z-octadecenoyl)-sn-glycero-3-phosphate + H(+). The enzyme catalyses 1-hexadecanoyl-sn-glycero-3-phosphocholine + H2O = sn-glycerol 3-phosphocholine + hexadecanoate + H(+). With respect to regulation, lysophospholipase D activity is stimulated by calcium. Loss of lysophospholipase D activity in presence of EDTA. Its function is as follows. Hydrolyzes lysoglycerophospholipids to produce lysophosphatidic acid (LPA) and the corresponding amines. Shows a preference for 1-O-alkyl-sn-glycero-3-phosphocholine (lyso-PAF), lysophosphatidylcholine (lyso-PC) and N-acylethanolamine lysophospholipids. Does not display glycerophosphodiester phosphodiesterase activity, since it cannot hydrolyze either glycerophosphoinositol or glycerophosphocholine. The protein is Lysophospholipase D GDPD3 of Mus musculus (Mouse).